The following is a 357-amino-acid chain: tRNA pseudouridine synthase D (357 aa).

Residue Asp76 is the Nucleophile of the active site. The TRUD domain maps to 151–331; that stretch reads GMPNYFGYQR…DGRYKDEEAQ (181 aa).

Belongs to the pseudouridine synthase TruD family.

It catalyses the reaction uridine(13) in tRNA = pseudouridine(13) in tRNA. Functionally, responsible for synthesis of pseudouridine from uracil-13 in transfer RNAs. This Sulfurimonas denitrificans (strain ATCC 33889 / DSM 1251) (Thiomicrospira denitrificans (strain ATCC 33889 / DSM 1251)) protein is tRNA pseudouridine synthase D.